The primary structure comprises 356 residues: tRNA N6-adenosine threonylcarbamoyltransferase (356 aa).

Positions 115 and 119 each coordinate Fe cation. Residues 138–142, Asp171, Gly184, and Asn283 contribute to the substrate site; that span reads LVSGG. Asp311 lines the Fe cation pocket.

This sequence belongs to the KAE1 / TsaD family. Fe(2+) is required as a cofactor.

It is found in the cytoplasm. It carries out the reaction L-threonylcarbamoyladenylate + adenosine(37) in tRNA = N(6)-L-threonylcarbamoyladenosine(37) in tRNA + AMP + H(+). Its function is as follows. Required for the formation of a threonylcarbamoyl group on adenosine at position 37 (t(6)A37) in tRNAs that read codons beginning with adenine. Is involved in the transfer of the threonylcarbamoyl moiety of threonylcarbamoyl-AMP (TC-AMP) to the N6 group of A37, together with TsaE and TsaB. TsaD likely plays a direct catalytic role in this reaction. The polypeptide is tRNA N6-adenosine threonylcarbamoyltransferase (Synechococcus sp. (strain WH7803)).